The following is a 596-amino-acid chain: Merlin (596 aa).

Phosphoserine is present on S13. Positions F22 to R311 constitute an FERM domain. S518 bears the Phosphoserine; by PAK mark. Residues V560–K580 are disordered.

In terms of assembly, interacts with NHERF1, HGS and AGAP2. Interacts with SGSM3. Interacts (via FERM domain) with MPP1. Interacts with LAYN. Interacts with WWC1. Interacts with the CUL4A-RBX1-DDB1-VprBP/DCAF1 E3 ubiquitin-protein ligase complex. The unphosphorylated form interacts (via FERM domain) with VPRBP/DCAF1. Interacts (via FERM domain) with NOP53; the interaction is direct. Interacts with SCHIP1; the interaction is direct. In terms of processing, phosphorylation of Ser-518 inhibits nuclear localization by disrupting the intramolecular association of the FERM domain with the C-terminal tail. The dephosphorylation of Ser-518 favors the interaction with NOP53. Ubiquitinated by the CUL4A-RBX1-DDB1-DCAF1/VprBP E3 ubiquitin-protein ligase complex for ubiquitination and subsequent proteasome-dependent degradation.

It is found in the cell membrane. It localises to the cell projection. Its subcellular location is the cytoplasm. The protein localises to the cytoskeleton. The protein resides in the nucleus. Probable regulator of the Hippo/SWH (Sav/Wts/Hpo) signaling pathway, a signaling pathway that plays a pivotal role in tumor suppression by restricting proliferation and promoting apoptosis. Along with WWC1 can synergistically induce the phosphorylation of LATS1 and LATS2 and can probably function in the regulation of the Hippo/SWH (Sav/Wts/Hpo) signaling pathway. May act as a membrane stabilizing protein. May inhibit PI3 kinase by binding to AGAP2 and impairing its stimulating activity. Suppresses cell proliferation and tumorigenesis by inhibiting the CUL4A-RBX1-DDB1-VprBP/DCAF1 E3 ubiquitin-protein ligase complex. Plays a role in lens development and is required for complete fiber cell terminal differentiation, maintenance of cell polarity and separation of the lens vesicle from the corneal epithelium. The protein is Merlin (Nf2) of Mus musculus (Mouse).